A 127-amino-acid polypeptide reads, in one-letter code: Large ribosomal subunit protein eL8 (127 aa).

This sequence belongs to the eukaryotic ribosomal protein eL8 family. Part of the 50S ribosomal subunit. Probably part of the RNase P complex.

Its subcellular location is the cytoplasm. Multifunctional RNA-binding protein that recognizes the K-turn motif in ribosomal RNA, the RNA component of RNase P, box H/ACA, box C/D and box C'/D' sRNAs. The chain is Large ribosomal subunit protein eL8 from Hyperthermus butylicus (strain DSM 5456 / JCM 9403 / PLM1-5).